The following is a 141-amino-acid chain: ATP synthase epsilon chain (141 aa).

It belongs to the ATPase epsilon chain family. F-type ATPases have 2 components, CF(1) - the catalytic core - and CF(0) - the membrane proton channel. CF(1) has five subunits: alpha(3), beta(3), gamma(1), delta(1), epsilon(1). CF(0) has three main subunits: a, b and c.

It is found in the cell inner membrane. Its function is as follows. Produces ATP from ADP in the presence of a proton gradient across the membrane. This is ATP synthase epsilon chain from Pseudomonas syringae pv. syringae (strain B728a).